The chain runs to 369 residues: MNKAYYIGLMSGTSMDGVDAVLVDFAGEQPQLIATHTEAIPSHLLKGLQRLCLPGNDEINRLGRLDRSVGKLFALAVNNLLAKAQIAKEDIIAIGSHGQTVRHMPNLEVGFTLQIGDPNTIATETGIDVIADFRRKDIALGGQGAPLVPAFHQQTFAQVGKKRVILNIGGIANITYLTGNREEVLGFDTGPGNTLIDAWIQQVKNEPYDKDGAWAASGNTDQQLLAQLLSHPYFSLAYPKSTGRELFNQAWLEQQLSEFNQLDEEDIQSTLLDLTCHSIARDILKLAPAGELFVCGGGAFNTELMQRLAALLPDYHLDTTSALGVDPKWAEGIAFAWLAMRHNLGLPANLPAVTGASREAVLGGRFSAK.

ATP is bound at residue 12 to 19; that stretch reads GTSMDGVD.

It belongs to the anhydro-N-acetylmuramic acid kinase family.

It carries out the reaction 1,6-anhydro-N-acetyl-beta-muramate + ATP + H2O = N-acetyl-D-muramate 6-phosphate + ADP + H(+). It participates in amino-sugar metabolism; 1,6-anhydro-N-acetylmuramate degradation. The protein operates within cell wall biogenesis; peptidoglycan recycling. Catalyzes the specific phosphorylation of 1,6-anhydro-N-acetylmuramic acid (anhMurNAc) with the simultaneous cleavage of the 1,6-anhydro ring, generating MurNAc-6-P. Is required for the utilization of anhMurNAc either imported from the medium or derived from its own cell wall murein, and thus plays a role in cell wall recycling. The chain is Anhydro-N-acetylmuramic acid kinase from Shewanella sp. (strain MR-7).